The chain runs to 97 residues: Essential MCU regulator, mitochondrial (97 aa).

The transit peptide at 1–37 (MAARMGVLSVAGFRAAARAGGLLARPKQSTAVVPCRT) directs the protein to the mitochondrion. Residues 38–55 (VIASSAGAILPKPEKVSF) are Mitochondrial matrix-facing. A helical membrane pass occupies residues 56-75 (GLLRVFTVVIPFLYIGTLIS). Over 76-97 (KNFAAVLEEHDIFVPEDDDDDD) the chain is Mitochondrial intermembrane.

This sequence belongs to the SMDT1/EMRE family. Component of the uniplex complex.

Its subcellular location is the mitochondrion inner membrane. In terms of biological role, essential regulatory subunit of the mitochondrial calcium uniporter complex (uniplex), a complex that mediates calcium uptake into mitochondria. Required to bridge the calcium-sensing proteins micu1 with the calcium-conducting subunit mcu. Acts by mediating activation of mcu and retention of micu1 to the mcu pore, in order to ensure tight regulation of the uniplex complex and appropriate responses to intracellular calcium signaling. The sequence is that of Essential MCU regulator, mitochondrial from Xenopus laevis (African clawed frog).